The primary structure comprises 137 residues: Secreted RxLR effector protein 67 (137 aa).

An N-terminal signal peptide occupies residues 1-18 (MRLYILVLAAIAVTLVFA). A RxLR-dEER motif is present at residues 32–61 (RALRQASITDEKSDDSLNAQAPPLSKSEKR). Residues 40 to 65 (TDEKSDDSLNAQAPPLSKSEKRLSRS) are disordered. Residues 114-134 (WFVRMILEAGIFWAVFHCLSA) traverse the membrane as a helical segment.

It belongs to the RxLR effector family.

It is found in the secreted. It localises to the host cytoplasm. Its subcellular location is the host nucleus. The protein localises to the membrane. Its function is as follows. Effector that partially suppresses the tobacco programmed cell death induced by cell death-inducing proteins. In Plasmopara viticola (Downy mildew of grapevine), this protein is Secreted RxLR effector protein 67.